A 347-amino-acid polypeptide reads, in one-letter code: NADH-ubiquinone oxidoreductase chain 2 (347 aa).

Helical transmembrane passes span 13-33, 59-79, 96-116, 122-142, 149-169, 178-198, 200-220, 240-260, 276-296, and 325-345; these read VILG…WIGF, YFFT…LNLM, MIMT…FWVP, IPLS…LTVL, INLT…GWGG, IMAY…IYNP, MTLL…MLFM, IVTI…LTGF, IILP…YMRL, and LLTP…MIII.

This sequence belongs to the complex I subunit 2 family. Core subunit of respiratory chain NADH dehydrogenase (Complex I) which is composed of 45 different subunits. Interacts with TMEM242.

The protein resides in the mitochondrion inner membrane. It carries out the reaction a ubiquinone + NADH + 5 H(+)(in) = a ubiquinol + NAD(+) + 4 H(+)(out). In terms of biological role, core subunit of the mitochondrial membrane respiratory chain NADH dehydrogenase (Complex I) which catalyzes electron transfer from NADH through the respiratory chain, using ubiquinone as an electron acceptor. Essential for the catalytic activity and assembly of complex I. In Molossus ater (Black mastiff bat), this protein is NADH-ubiquinone oxidoreductase chain 2.